The sequence spans 299 residues: ATP phosphoribosyltransferase (299 aa).

The protein belongs to the ATP phosphoribosyltransferase family. Long subfamily. Mg(2+) is required as a cofactor.

It is found in the cytoplasm. The catalysed reaction is 1-(5-phospho-beta-D-ribosyl)-ATP + diphosphate = 5-phospho-alpha-D-ribose 1-diphosphate + ATP. Its pathway is amino-acid biosynthesis; L-histidine biosynthesis; L-histidine from 5-phospho-alpha-D-ribose 1-diphosphate: step 1/9. Feedback inhibited by histidine. Functionally, catalyzes the condensation of ATP and 5-phosphoribose 1-diphosphate to form N'-(5'-phosphoribosyl)-ATP (PR-ATP). Has a crucial role in the pathway because the rate of histidine biosynthesis seems to be controlled primarily by regulation of HisG enzymatic activity. The protein is ATP phosphoribosyltransferase of Shewanella piezotolerans (strain WP3 / JCM 13877).